Reading from the N-terminus, the 406-residue chain is MADGNEDARAEDLPGPAFENYEAMELACPAERSGHVAVSDGRHMFVWGGYKSNQVRGLYDFYLPREELWIYNMETGRWKKINTEGDVPPSMSGSCAVCVDRVLYLFGGHHSRGNTNKFYMLDSRSADRGLQWERIDCQGIPPSSKDKLGVWVYKNKLIFFGGYGYLPEDKVLGTFEFDETSFWNSSHPRGWNDHVHILDTETFAWSQPITTGKAPSPRAAHACATVGNKGFVFGGRYRDARMNDLHYLNLDTWEWNELIPQGVCPVGRSWHSLTPVSSDHLFLFGGFTTEKQPLSDAWTYCISKNEWIQFNHPYVEKPRLWHTACASDEGEVIVFGGCANNLLVHHRAAHSNEVLIFSVQPKSLVRLSLEAVICFKEMLANSWSCLPKHLLHSVNQRFGSNNTSGS.

Kelch repeat units follow at residues 31 to 85 (ERSG…NTEG), 92 to 136 (SGSC…ERID), 148 to 207 (LGVW…AWSQ), 221 to 259 (HACATVGNKGFVFGGRYRDARMNDLHYLNLDTWEWNELI), 271 to 311 (HSLT…IQFN), and 322 to 359 (HTACASDEGEVIVFGGCANNLLVHHRAAHSNEVLIFSV).

As to quaternary structure, component of a CRL2(KLHDC2) E3 ubiquitin-protein ligase complex, also named ECS(KLHDC2) complex, composed of CUL2, Elongin BC (ELOB and ELOC), RBX1 and substrate-specific adapter KLHDC2. May form oligomers as a KLHDC2-ELOB-ELOC complex; this interaction is autoinhibitory for the E3 ligase complex as the substrate-binding site of KLHDC2 is blocked in the oligomer. Interacts with CREB3; interaction is direct and specific as it does not interact with CREB1, ATF4, ATF6, JUN, FOS, CEBPA or herpes simplex virus transactivator VP16. In terms of processing, autoubiquitinated by the CRL2(KLHDC2) E3 ligase complex.

Its subcellular location is the nucleus. The protein operates within protein modification; protein ubiquitination. In terms of biological role, substrate-recognition component of a Cul2-RING (CRL2) E3 ubiquitin-protein ligase complex of the DesCEND (destruction via C-end degrons) pathway, which recognizes a C-degron located at the extreme C terminus of target proteins, leading to their ubiquitination and degradation. The C-degron recognized by the DesCEND pathway is usually a motif of less than ten residues and can be present in full-length proteins, truncated proteins or proteolytically cleaved forms. The CRL2(KLHDC2) complex specifically recognizes proteins with a diglycine (Gly-Gly) at the C-terminus, leading to their ubiquitination and degradation. The CRL2(KLHDC2) complex mediates ubiquitination and degradation of truncated SELENOK and SELENOS selenoproteins produced by failed UGA/Sec decoding, which end with a diglycine. The CRL2(KLHDC2) complex also recognizes proteolytically cleaved proteins ending with Gly-Gly, such as the N-terminal fragment of USP1, leading to their degradation. May also act as an indirect repressor of CREB3-mediated transcription by interfering with CREB3-DNA-binding. This is Kelch domain-containing protein 2 from Mus musculus (Mouse).